Here is a 117-residue protein sequence, read N- to C-terminus: Immunoglobulin heavy variable 4-38-2 (117 aa).

The signal sequence occupies residues 1 to 19 (MKHLWFFLLLVAAPRWVLS). The framework-1 stretch occupies residues 20 to 44 (QVQLQESGPGLVKPSETLSLTCTVS). The region spanning 20–117 (QVQLQESGPG…ADTAVYYCAR (98 aa)) is the Ig-like domain. C41 and C115 form a disulfide bridge. Residues 45–53 (GYSISSGYY) are complementarity-determining-1. Residues 54–70 (WGWIRQPPGKGLEWIGS) form a framework-2 region. Positions 71–77 (IYHSGST) are complementarity-determining-2. The segment at 78–115 (YYNPSLKSRVTISVDTSKNQFSLKLSSVTAADTAVYYC) is framework-3. The interval 116 to 117 (AR) is complementarity-determining-3.

As to quaternary structure, immunoglobulins are composed of two identical heavy chains and two identical light chains; disulfide-linked.

The protein resides in the secreted. It is found in the cell membrane. In terms of biological role, v region of the variable domain of immunoglobulin heavy chains that participates in the antigen recognition. Immunoglobulins, also known as antibodies, are membrane-bound or secreted glycoproteins produced by B lymphocytes. In the recognition phase of humoral immunity, the membrane-bound immunoglobulins serve as receptors which, upon binding of a specific antigen, trigger the clonal expansion and differentiation of B lymphocytes into immunoglobulins-secreting plasma cells. Secreted immunoglobulins mediate the effector phase of humoral immunity, which results in the elimination of bound antigens. The antigen binding site is formed by the variable domain of one heavy chain, together with that of its associated light chain. Thus, each immunoglobulin has two antigen binding sites with remarkable affinity for a particular antigen. The variable domains are assembled by a process called V-(D)-J rearrangement and can then be subjected to somatic hypermutations which, after exposure to antigen and selection, allow affinity maturation for a particular antigen. In Homo sapiens (Human), this protein is Immunoglobulin heavy variable 4-38-2.